The following is a 289-amino-acid chain: 26S proteasome non-ATPase regulatory subunit 8 (289 aa).

Position 45 is a phosphoserine (Ser45). The PCI domain maps to 101 to 270 (PSFERYMAQL…QQKPEDTTIP (170 aa)). Lys236 participates in a covalent cross-link: Glycyl lysine isopeptide (Lys-Gly) (interchain with G-Cter in SUMO2).

Belongs to the proteasome subunit S14 family. As to quaternary structure, component of the 19S proteasome regulatory particle complex. The 26S proteasome consists of a 20S core particle (CP) and two 19S regulatory subunits (RP). The regulatory particle is made of a lid composed of 9 subunits including PSMD8, a base containing 6 ATPases and few additional components. Interacts with DDI2. Interacts with TASOR.

Component of the 26S proteasome, a multiprotein complex involved in the ATP-dependent degradation of ubiquitinated proteins. This complex plays a key role in the maintenance of protein homeostasis by removing misfolded or damaged proteins, which could impair cellular functions, and by removing proteins whose functions are no longer required. Therefore, the proteasome participates in numerous cellular processes, including cell cycle progression, apoptosis, or DNA damage repair. The protein is 26S proteasome non-ATPase regulatory subunit 8 (PSMD8) of Pongo abelii (Sumatran orangutan).